A 315-amino-acid polypeptide reads, in one-letter code: Probable cell division protein WhiA (315 aa).

Positions 280–313 (SLKELGQMLDPQVGKSGINHRLRKIEKIAEELRT) form a DNA-binding region, H-T-H motif.

It belongs to the WhiA family.

Involved in cell division and chromosome segregation. This is Probable cell division protein WhiA from Clostridium botulinum (strain Alaska E43 / Type E3).